The primary structure comprises 282 residues: 4-diphosphocytidyl-2-C-methyl-D-erythritol kinase (282 aa).

The active site involves lysine 15. An ATP-binding site is contributed by 98 to 108; sequence PMGGGVGGGSS. Aspartate 140 is an active-site residue.

It belongs to the GHMP kinase family. IspE subfamily.

The catalysed reaction is 4-CDP-2-C-methyl-D-erythritol + ATP = 4-CDP-2-C-methyl-D-erythritol 2-phosphate + ADP + H(+). It participates in isoprenoid biosynthesis; isopentenyl diphosphate biosynthesis via DXP pathway; isopentenyl diphosphate from 1-deoxy-D-xylulose 5-phosphate: step 3/6. Functionally, catalyzes the phosphorylation of the position 2 hydroxy group of 4-diphosphocytidyl-2C-methyl-D-erythritol. This is 4-diphosphocytidyl-2-C-methyl-D-erythritol kinase from Azoarcus sp. (strain BH72).